A 907-amino-acid polypeptide reads, in one-letter code: Clathrin coat assembly protein AP180 (907 aa).

In terms of domain architecture, ENTH spans 14–145 (QYSVTGSAVA…FSYRQMAFDF (132 aa)). Disordered stretches follow at residues 285–326 (LEGK…DTSP), 342–380 (TSKP…TAWG), 393–414 (SVPS…PTTT), and 505–525 (VPVV…APSP). Residues Ser296, Ser300, and Ser306 each carry the phosphoserine modification. Polar residues predominate over residues 302–324 (LSKSSPATTVTSPNSTPAKTIDT). The O-linked (GlcNAc) threonine glycan is linked to Thr310. Ser313 carries the phosphoserine modification. Thr317 is subject to Phosphothreonine. The segment covering 505–515 (VPVVTPTASTA) has biased composition (low complexity). The span at 516-525 (PPVPATAPSP) shows a compositional bias: pro residues. Residues Ser596, Ser602, Ser623, Ser629, and Ser763 each carry the phosphoserine modification. Arg865 carries the post-translational modification Asymmetric dimethylarginine; alternate. Arg865 is subject to Omega-N-methylarginine; alternate. Positions 867-907 (PFGAAAVPGTQLSPSPTPASQSPKKPPAKDPLADLNIKDFL) are disordered. Basic and acidic residues predominate over residues 893–907 (PAKDPLADLNIKDFL).

It belongs to the PICALM/SNAP91 family. In terms of assembly, binds AP2A2. Interacts with AP2B1; clathrin competes with SNAP91. In terms of processing, thr-310 can be modified by the addition of N-acetylglucosamine which can be further phosphorylated. There is no evidence for direct Thr-310 phosphorylation.

It is found in the cell membrane. Its subcellular location is the membrane. The protein resides in the coated pit. Functionally, adaptins are components of the adapter complexes which link clathrin to receptors in coated vesicles. Clathrin-associated protein complexes are believed to interact with the cytoplasmic tails of membrane proteins, leading to their selection and concentration. Binding of AP180 to clathrin triskelia induces their assembly into 60-70 nm coats. This chain is Clathrin coat assembly protein AP180 (SNAP91), found in Homo sapiens (Human).